A 337-amino-acid polypeptide reads, in one-letter code: UDP-3-O-acylglucosamine N-acyltransferase (337 aa).

H238 serves as the catalytic Proton acceptor.

The protein belongs to the transferase hexapeptide repeat family. LpxD subfamily. Homotrimer.

It catalyses the reaction a UDP-3-O-[(3R)-3-hydroxyacyl]-alpha-D-glucosamine + a (3R)-hydroxyacyl-[ACP] = a UDP-2-N,3-O-bis[(3R)-3-hydroxyacyl]-alpha-D-glucosamine + holo-[ACP] + H(+). Its pathway is bacterial outer membrane biogenesis; LPS lipid A biosynthesis. Catalyzes the N-acylation of UDP-3-O-acylglucosamine using 3-hydroxyacyl-ACP as the acyl donor. Is involved in the biosynthesis of lipid A, a phosphorylated glycolipid that anchors the lipopolysaccharide to the outer membrane of the cell. The protein is UDP-3-O-acylglucosamine N-acyltransferase of Xanthomonas campestris pv. campestris (strain 8004).